The sequence spans 704 residues: Tetratricopeptide repeat protein 12 (704 aa).

Thr71 carries the post-translational modification Phosphothreonine. 3 TPR repeats span residues 105 to 138 (ADAL…LKDM), 139 to 172 (KVLY…DENC), and 173 to 206 (TKAY…NPKL).

Its subcellular location is the cytoplasm. Cytoplasmic protein that plays a role in the proper assembly of dynein arm complexes in motile cilia in both respiratory cells and sperm flagella. The protein is Tetratricopeptide repeat protein 12 (Ttc12) of Mus musculus (Mouse).